The chain runs to 137 residues: Sporulation-specific cell division protein SsgB (137 aa).

The protein belongs to the SsgA family. Interacts with SsgA. Interacts with FtsZ (via N-terminus).

The protein localises to the cell septum. Functionally, involved in sporulation-specific cell division. Required for early stages of sporulation. Important in the process of growth cessation prior to sporulation-specific cell division. Recruits cell division protein FtsZ to the future septum sites and tethers the contractile ring structure (Z ring) to the cytoplasmic membrane during sporulation. Stimulates polymerization and filament length of FtsZ in vitro. The protein is Sporulation-specific cell division protein SsgB of Streptomyces coelicolor (strain ATCC BAA-471 / A3(2) / M145).